The primary structure comprises 348 residues: Anthranilate phosphoribosyltransferase (348 aa).

5-phospho-alpha-D-ribose 1-diphosphate-binding positions include G81, 84-85 (GD), T89, 91-94 (NIST), 109-117 (KHGNRAMSS), and S121. G81 provides a ligand contact to anthranilate. S93 provides a ligand contact to Mg(2+). N112 is a binding site for anthranilate. Anthranilate is bound at residue R167. Mg(2+) is bound by residues D226 and E227.

This sequence belongs to the anthranilate phosphoribosyltransferase family. Homodimer. Requires Mg(2+) as cofactor.

It carries out the reaction N-(5-phospho-beta-D-ribosyl)anthranilate + diphosphate = 5-phospho-alpha-D-ribose 1-diphosphate + anthranilate. It functions in the pathway amino-acid biosynthesis; L-tryptophan biosynthesis; L-tryptophan from chorismate: step 2/5. In terms of biological role, catalyzes the transfer of the phosphoribosyl group of 5-phosphorylribose-1-pyrophosphate (PRPP) to anthranilate to yield N-(5'-phosphoribosyl)-anthranilate (PRA). In Thermomicrobium roseum (strain ATCC 27502 / DSM 5159 / P-2), this protein is Anthranilate phosphoribosyltransferase.